Reading from the N-terminus, the 882-residue chain is MTDVTVKSLAEEIKTSVDRLVQQFFDAGIKKSQTDTVTQQEKEKLLAHLNRQQGTVDNQLTLQRKTRSVLNIQVTGGKSKTVHIEVRKKRTYVNPSVTKPEAPLPEEENAQIPKITKNTFSQESLNKTSPQKSLKTKAIEKAKIESPKKERHSLKEKQKKEAQSEKARREAEASSLKRFAEEEVRRKVEEEAKRVAEQARKMAIENEAKWSELVADQIDSVDYHVTTSEHARAAEDENDAKVEGDRRSRHRGTKTTKQKKTNKLSESKTDREEARAVVRKSKRKPSALQQSFNKPVVALNRDVVIGETISVAELANKMAVKGSQVIKAMMKLGAMATINQVIDQETAQLVAEEMGHKVILRRENELEEALMSDRDTGVLTVHRAPVVTIMGHVDHGKTSLLDYIRSTKVATGEAGGITQHIGAYHVETENGMITFLDTPGHAAFTSMRARGAQATDIVVLVVAADDGVMPQTIEAIQHAKAAKVPVVVAVNKIDKAEADPDRVKKELIQHGIQPEEWGGDSQFIHVSAKVGTGIDDLLNAILLQAEVLELKAVKSGMANGVVIESFLDKGRGPVATVLVQEGTLNKGDIVLCGFQYGRVRAMRNELGREVISAGPSIPVEILGLSSVSSAGDAVTVVRDEKKAREVALYRQGKFREIKLARQQKSKLENMFDSLREGEISELNIVLKSDVQGSCEAIREALQKLSTDEVKIKIIGSGVGGITETDATLAAASNAIILGFNVRADAATRRLVEAENLNLRYYSVIYDLLDEVKQAMSGMLSPKYEQKIIGLAEVRDVFKSPKFGAIAGCMVVEGLIKRSSPIRVLRNNVVIYEGELESLRRFKDDVNEVRNGIECGIGVKNYDVQVNDTIEVFEIIEIKRTIS.

Disordered stretches follow at residues 95–176 (PSVT…ASSL) and 229–289 (EHAR…SALQ). The segment covering 116-133 (TKNTFSQESLNKTSPQKS) has biased composition (polar residues). 2 stretches are compositionally biased toward basic and acidic residues: residues 137 to 172 (KAIEKAKIESPKKERHSLKEKQKKEAQSEKARREAE) and 229 to 246 (EHARAAEDENDAKVEGDR). The span at 247–262 (RSRHRGTKTTKQKKTN) shows a compositional bias: basic residues. Over residues 263–276 (KLSESKTDREEARA) the composition is skewed to basic and acidic residues. Residues 382-551 (HRAPVVTIMG…LLQAEVLELK (170 aa)) form the tr-type G domain. A G1 region spans residues 391–398 (GHVDHGKT). 391 to 398 (GHVDHGKT) serves as a coordination point for GTP. Residues 416-420 (GITQH) form a G2 region. A G3 region spans residues 437 to 440 (DTPG). GTP is bound by residues 437–441 (DTPGH) and 491–494 (NKID). The G4 stretch occupies residues 491–494 (NKID). The tract at residues 527–529 (SAK) is G5.

The protein belongs to the TRAFAC class translation factor GTPase superfamily. Classic translation factor GTPase family. IF-2 subfamily.

The protein localises to the cytoplasm. Its function is as follows. One of the essential components for the initiation of protein synthesis. Protects formylmethionyl-tRNA from spontaneous hydrolysis and promotes its binding to the 30S ribosomal subunits. Also involved in the hydrolysis of GTP during the formation of the 70S ribosomal complex. The chain is Translation initiation factor IF-2 from Hamiltonella defensa subsp. Acyrthosiphon pisum (strain 5AT).